A 247-amino-acid polypeptide reads, in one-letter code: Probable cyclic nucleotide phosphodiesterase XBJ1_0953 (247 aa).

Residues Asp-8, His-10, Asp-52, Asn-82, His-154, His-192, and His-194 each coordinate Fe cation. AMP contacts are provided by residues His-10, Asp-52, and 82 to 83 (NH). An AMP-binding site is contributed by His-194.

It belongs to the cyclic nucleotide phosphodiesterase class-III family. It depends on Fe(2+) as a cofactor.

This chain is Probable cyclic nucleotide phosphodiesterase XBJ1_0953, found in Xenorhabdus bovienii (strain SS-2004) (Xenorhabdus nematophila subsp. bovienii).